We begin with the raw amino-acid sequence, 165 residues long: Deoxyuridine 5'-triphosphate nucleotidohydrolase (165 aa).

Belongs to the dUTPase family. As to quaternary structure, homotrimer. It depends on Mg(2+) as a cofactor.

It is found in the host cytoplasm. The protein localises to the virion. It catalyses the reaction dUTP + H2O = dUMP + diphosphate + H(+). Functionally, the viral dUTPase may play a role in lowering the dUTP concentration in natural infections to minimize misincorporation of deoxyuridine into the viral DNA and ensure the fidelity of genome replication. The polypeptide is Deoxyuridine 5'-triphosphate nucleotidohydrolase (Ornithodoros (relapsing fever ticks)).